The primary structure comprises 290 residues: MTKDRLAALKAAQSDDDDNDDVAVTVDSSGFMEEFFEQVDEIREMIDKIASNVDEVKKKHSAILSAPQTDDKMKEELEELMSEIKKNANKVRAKLKVIEQNIEQEEHTNKSSADLRIRKTQHATLSRKFVEVMNDYNACQIDYRERCKGRIKRQLAITGKTTTNEELEDMIESGNPAIFTQGIIMETQQANETLADIEARHNDIMKLETSIRDLHDMFMDMAMLVESQGEMIDRIEYNVEQAVDYIETAKMDTKKAVKYQSKARRKKIMILVCLAILIIILVGVIGGTLG.

The interval 1–22 (MTKDRLAALKAAQSDDDDNDDV) is disordered. Topologically, residues 1–267 (MTKDRLAALK…KYQSKARRKK (267 aa)) are cytoplasmic. A coiled-coil region spans residues 32-114 (MEEFFEQVDE…EEHTNKSSAD (83 aa)). The t-SNARE coiled-coil homology domain maps to 194-256 (LADIEARHND…ETAKMDTKKA (63 aa)). A helical; Anchor for type IV membrane protein membrane pass occupies residues 268-288 (IMILVCLAILIIILVGVIGGT). Topologically, residues 289-290 (LG) are extracellular.

It belongs to the syntaxin family.

The protein localises to the membrane. Functionally, potentially involved in docking of synaptic vesicles at presynaptic active zones. The polypeptide is Syntaxin (Aplysia californica (California sea hare)).